A 211-amino-acid chain; its full sequence is Urease accessory protein UreF (211 aa).

The tract at residues 71–93 (DDADRETDARTPAPAARHASRSQ) is disordered.

The protein belongs to the UreF family. UreD, UreF and UreG form a complex that acts as a GTP-hydrolysis-dependent molecular chaperone, activating the urease apoprotein by helping to assemble the nickel containing metallocenter of UreC. The UreE protein probably delivers the nickel.

The protein localises to the cytoplasm. Required for maturation of urease via the functional incorporation of the urease nickel metallocenter. The protein is Urease accessory protein UreF of Mycobacterium tuberculosis (strain ATCC 25177 / H37Ra).